The sequence spans 475 residues: Aspartyl/glutamyl-tRNA(Asn/Gln) amidotransferase subunit B (475 aa).

The protein belongs to the GatB/GatE family. GatB subfamily. As to quaternary structure, heterotrimer of A, B and C subunits.

It catalyses the reaction L-glutamyl-tRNA(Gln) + L-glutamine + ATP + H2O = L-glutaminyl-tRNA(Gln) + L-glutamate + ADP + phosphate + H(+). The catalysed reaction is L-aspartyl-tRNA(Asn) + L-glutamine + ATP + H2O = L-asparaginyl-tRNA(Asn) + L-glutamate + ADP + phosphate + 2 H(+). Its function is as follows. Allows the formation of correctly charged Asn-tRNA(Asn) or Gln-tRNA(Gln) through the transamidation of misacylated Asp-tRNA(Asn) or Glu-tRNA(Gln) in organisms which lack either or both of asparaginyl-tRNA or glutaminyl-tRNA synthetases. The reaction takes place in the presence of glutamine and ATP through an activated phospho-Asp-tRNA(Asn) or phospho-Glu-tRNA(Gln). The polypeptide is Aspartyl/glutamyl-tRNA(Asn/Gln) amidotransferase subunit B (Macrococcus caseolyticus (strain JCSC5402) (Macrococcoides caseolyticum)).